A 477-amino-acid polypeptide reads, in one-letter code: PTS system glucose-specific EIICB component (477 aa).

The 388-residue stretch at 1-388 (MFKNVFSSLQ…FNLKTPGREE (388 aa)) folds into the PTS EIIC type-1 domain. Helical transmembrane passes span 20-40 (VSVLPIAGILLGIGSAHFTLI), 51-71 (TGGSIFSNMPLIFAIGVALGF), 76-96 (GVAALAAVVAYSILIQTLSAV), 112-132 (NFSDIGILGGIIAGAISAYMF), 152-172 (FVPIISGLFAIFVGLILSLIW), 250-270 (LSGGFIFKMYGLPGAALAIWH), 280-300 (IGSIMISAALTAFLTGITEPI), 304-324 (FILVAPILYIIHAILAGLSFP), and 354-374 (IFLFPIVGICYGLLYYSIFYF). In terms of domain architecture, PTS EIIB type-1 spans 399–477 (IEIAPYIVEA…TAIDEYINNI (79 aa)). The active-site Phosphocysteine intermediate; for EIIB activity is the cysteine 421. Cysteine 421 carries the phosphocysteine modification.

The protein resides in the cell inner membrane. It catalyses the reaction N(pros)-phospho-L-histidyl-[protein] + D-glucose(out) = D-glucose 6-phosphate(in) + L-histidyl-[protein]. Functionally, the phosphoenolpyruvate-dependent sugar phosphotransferase system (sugar PTS), a major carbohydrate active transport system, catalyzes the phosphorylation of incoming sugar substrates concomitantly with their translocation across the cell membrane. The enzyme II complex composed of PtsG and Crr is involved in glucose transport. The sequence is that of PTS system glucose-specific EIICB component (ptsG) from Buchnera aphidicola subsp. Schizaphis graminum (strain Sg).